The following is a 395-amino-acid chain: D-alanine--D-alanine ligase (395 aa).

Residues lysine 172–glutamate 391 enclose the ATP-grasp domain. Aspartate 204–glutamate 266 contributes to the ATP binding site. Residues aspartate 345, glutamate 358, and asparagine 360 each contribute to the Mg(2+) site.

The protein belongs to the D-alanine--D-alanine ligase family. The cofactor is Mg(2+). It depends on Mn(2+) as a cofactor.

Its subcellular location is the cytoplasm. It catalyses the reaction 2 D-alanine + ATP = D-alanyl-D-alanine + ADP + phosphate + H(+). The protein operates within cell wall biogenesis; peptidoglycan biosynthesis. Its function is as follows. Cell wall formation. This Bifidobacterium longum (strain DJO10A) protein is D-alanine--D-alanine ligase.